Reading from the N-terminus, the 585-residue chain is L-gulonolactone oxidase 3 (585 aa).

An N-terminal signal peptide occupies residues 1–24 (MRYSHTLQQFSILSFFVTIWTVQS). Positions 51–233 (KTCHAANVTY…SKVKLSIEKA (183 aa)) constitute an FAD-binding PCMH-type domain.

Belongs to the oxygen-dependent FAD-linked oxidoreductase family. FAD is required as a cofactor.

It is found in the vacuole. It carries out the reaction L-gulono-1,4-lactone + O2 = L-ascorbate + H2O2 + H(+). It participates in cofactor biosynthesis; L-ascorbate biosynthesis. Catalyzes the oxidation of L-gulono-1,4-lactone to ascorbic acid. L-gulono-1,4-lactone is oxidized to hydrogen peroxide and L-xylo-hexulonolactone which spontaneously isomerizes to L-ascorbate. The chain is L-gulonolactone oxidase 3 from Arabidopsis thaliana (Mouse-ear cress).